Reading from the N-terminus, the 748-residue chain is Elongation factor G, mitochondrial (748 aa).

Residues 1–14 constitute a mitochondrion transit peptide; that stretch reads MTISSFLRVRHSLA. Positions 40-318 constitute a tr-type G domain; sequence ERIRNIGISA…VLNYLPHPGE (279 aa). GTP is bound by residues 49–56, 116–120, and 170–173; these read AHIDSGKT, DTPGH, and NKLD.

This sequence belongs to the TRAFAC class translation factor GTPase superfamily. Classic translation factor GTPase family. EF-G/EF-2 subfamily.

The protein localises to the mitochondrion. It functions in the pathway protein biosynthesis; polypeptide chain elongation. Its function is as follows. Mitochondrial GTPase that catalyzes the GTP-dependent ribosomal translocation step during translation elongation. During this step, the ribosome changes from the pre-translocational (PRE) to the post-translocational (POST) state as the newly formed A-site-bound peptidyl-tRNA and P-site-bound deacylated tRNA move to the P and E sites, respectively. Catalyzes the coordinated movement of the two tRNA molecules, the mRNA and conformational changes in the ribosome. The polypeptide is Elongation factor G, mitochondrial (Aedes aegypti (Yellowfever mosquito)).